The chain runs to 333 residues: Beta-ketoacyl-[acyl-carrier-protein] synthase III (333 aa).

Active-site residues include Cys-112 and His-255. Residues 256–260 are ACP-binding; sequence QANQR. Asn-285 is an active-site residue.

Belongs to the thiolase-like superfamily. FabH family. Homodimer.

The protein resides in the cytoplasm. The enzyme catalyses malonyl-[ACP] + acetyl-CoA + H(+) = 3-oxobutanoyl-[ACP] + CO2 + CoA. The protein operates within lipid metabolism; fatty acid biosynthesis. Functionally, catalyzes the condensation reaction of fatty acid synthesis by the addition to an acyl acceptor of two carbons from malonyl-ACP. Catalyzes the first condensation reaction which initiates fatty acid synthesis and may therefore play a role in governing the total rate of fatty acid production. Possesses both acetoacetyl-ACP synthase and acetyl transacylase activities. Its substrate specificity determines the biosynthesis of branched-chain and/or straight-chain of fatty acids. The sequence is that of Beta-ketoacyl-[acyl-carrier-protein] synthase III from Synechococcus sp. (strain RCC307).